The chain runs to 429 residues: Putative GMP synthase [glutamine-hydrolyzing] (429 aa).

The Glutamine amidotransferase type-1 domain occupies 10–118 (TIFILDFGSQ…GYTPIHLYPC (109 aa)). Cys87 serves as the catalytic Nucleophile. The 186-residue stretch at 119 to 304 (ELFKHIVDCE…LGLSSYLLDR (186 aa)) folds into the GMPS ATP-PPase domain. Active-site residues include His176 and Glu178.

Homodimer.

The catalysed reaction is XMP + L-glutamine + ATP + H2O = GMP + L-glutamate + AMP + diphosphate + 2 H(+). Its pathway is purine metabolism; GMP biosynthesis; GMP from XMP (L-Gln route): step 1/1. Its function is as follows. Catalyzes the synthesis of GMP from XMP. The protein is Putative GMP synthase [glutamine-hydrolyzing] (guaA) of Chlamydia pneumoniae (Chlamydophila pneumoniae).